We begin with the raw amino-acid sequence, 447 residues long: Signal recognition particle 54 kDa protein (447 aa).

GTP contacts are provided by residues 103–110, 185–189, and 245–248; these read GVQGSGKT, DTAGR, and TKMD.

Belongs to the GTP-binding SRP family. SRP54 subfamily. As to quaternary structure, part of the signal recognition particle protein translocation system, which is composed of SRP and FtsY. Archaeal SRP consists of a 7S RNA molecule of 300 nucleotides and two protein subunits: SRP54 and SRP19.

The protein resides in the cytoplasm. It carries out the reaction GTP + H2O = GDP + phosphate + H(+). Involved in targeting and insertion of nascent membrane proteins into the cytoplasmic membrane. Binds to the hydrophobic signal sequence of the ribosome-nascent chain (RNC) as it emerges from the ribosomes. The SRP-RNC complex is then targeted to the cytoplasmic membrane where it interacts with the SRP receptor FtsY. The chain is Signal recognition particle 54 kDa protein from Saccharolobus islandicus (strain Y.G.57.14 / Yellowstone #1) (Sulfolobus islandicus).